The sequence spans 122 residues: Small ribosomal subunit protein uS13 (122 aa).

A disordered region spans residues Pro97–Lys122.

This sequence belongs to the universal ribosomal protein uS13 family. As to quaternary structure, part of the 30S ribosomal subunit. Forms a loose heterodimer with protein S19. Forms two bridges to the 50S subunit in the 70S ribosome.

Functionally, located at the top of the head of the 30S subunit, it contacts several helices of the 16S rRNA. In the 70S ribosome it contacts the 23S rRNA (bridge B1a) and protein L5 of the 50S subunit (bridge B1b), connecting the 2 subunits; these bridges are implicated in subunit movement. Contacts the tRNAs in the A and P-sites. This is Small ribosomal subunit protein uS13 from Rhizobium rhizogenes (strain K84 / ATCC BAA-868) (Agrobacterium radiobacter).